The chain runs to 272 residues: Dermonecrotic toxin SpeSicTox-betaIB1a (272 aa).

Residue His-5 is part of the active site. Mg(2+) is bound by residues Glu-25 and Asp-27. Residue His-41 is the Nucleophile of the active site. 2 disulfide bridges follow: Cys-45–Cys-51 and Cys-47–Cys-191. Position 85 (Asp-85) interacts with Mg(2+).

Belongs to the arthropod phospholipase D family. Class II subfamily. The cofactor is Mg(2+). As to expression, expressed by the venom gland.

It localises to the secreted. It catalyses the reaction an N-(acyl)-sphingosylphosphocholine = an N-(acyl)-sphingosyl-1,3-cyclic phosphate + choline. The catalysed reaction is an N-(acyl)-sphingosylphosphoethanolamine = an N-(acyl)-sphingosyl-1,3-cyclic phosphate + ethanolamine. The enzyme catalyses a 1-acyl-sn-glycero-3-phosphocholine = a 1-acyl-sn-glycero-2,3-cyclic phosphate + choline. It carries out the reaction a 1-acyl-sn-glycero-3-phosphoethanolamine = a 1-acyl-sn-glycero-2,3-cyclic phosphate + ethanolamine. Dermonecrotic toxins cleave the phosphodiester linkage between the phosphate and headgroup of certain phospholipids (sphingolipid and lysolipid substrates), forming an alcohol (often choline) and a cyclic phosphate. This toxin acts on sphingomyelin (SM). It may also act on ceramide phosphoethanolamine (CPE), lysophosphatidylcholine (LPC) and lysophosphatidylethanolamine (LPE), but not on lysophosphatidylserine (LPS), and lysophosphatidylglycerol (LPG). It acts by transphosphatidylation, releasing exclusively cyclic phosphate products as second products. Induces dermonecrosis, hemolysis, increased vascular permeability, edema, inflammatory response, and platelet aggregation. The polypeptide is Dermonecrotic toxin SpeSicTox-betaIB1a (Sicarius peruensis (Six-eyed sand spider)).